Here is a 15281-residue protein sequence, read N- to C-terminus: Cyclosporin synthetase simA (15281 aa).

The interval 34 to 463 (SFAQGRLWFL…AVHVKTMPLT (430 aa)) is condensation 1. Residues 513-918 (SYSELDHKSD…NSDQVRDAAV (406 aa)) form an adenylation 1 region. In terms of domain architecture, Carrier 1 spans 1026 to 1100 (APRNEIEAVL…DLAATIQRGS (75 aa)). Ser1060 bears the O-(pantetheine 4'-phosphoryl)serine mark. The segment at 1118–1549 (SFAQGRLWFL…QTPIMTMPLT (432 aa)) is condensation 2. Residues 1599–2004 (SYAELDQRSD…SSAGVHDAVV (406 aa)) form an adenylation 2 region. A methyltransferase (M) domain 1 region spans residues 2067–2251 (SWTSMYDGTL…LEELEEELLV (185 aa)). The region spanning 2524 to 2598 (APRDSIEAII…DLAATIQQDT (75 aa)) is the Carrier 2 domain. Ser2558 is modified (O-(pantetheine 4'-phosphoryl)serine). The interval 2616–3044 (SFAQGRLWFL…EPDMPVASMA (429 aa)) is condensation 3. The segment at 3096–3498 (SYADLDRKSD…SHDLVTDAAV (403 aa)) is adenylation 3. The tract at residues 3562-3749 (SMYDGSLIKK…EDELLVDPAF (188 aa)) is methyltransferase (M) domain 2. One can recognise a Carrier 3 domain in the interval 4011 to 4085 (APRTEIERVL…DLVLIVQQGS (75 aa)). Ser4045 bears the O-(pantetheine 4'-phosphoryl)serine mark. The segment at 4100–4530 (VPQSFAQGRL…GPDVPISTLP (431 aa)) is condensation 4. An adenylation 4 region spans residues 4582-4986 (SYAQLDRESD…FLNDGFVEDV (405 aa)). The interval 5052–5241 (TSMYDGTEID…ELLVDPAFFT (190 aa)) is methyltransferase (M) domain 3. Residues 5503–5577 (PPRNSVEATV…DLAAVIQRNS (75 aa)) enclose the Carrier 4 domain. Ser5537 is subject to O-(pantetheine 4'-phosphoryl)serine. A condensation 5 region spans residues 5592–6023 (VPQSFAQGRL…QPLTPLAVLP (432 aa)). Residues 6075-6478 (TYAQLDQQSD…SHNSVQDAAV (404 aa)) form an adenylation 5 region. The interval 6545–6729 (WTSMYDGSEI…ELEANEEELL (185 aa)) is methyltransferase (M) domain 4. In terms of domain architecture, Carrier 5 spans 7000-7074 (APRNEIEAIL…DLAASIQRES (75 aa)). Position 7034 is an O-(pantetheine 4'-phosphoryl)serine (Ser7034). The tract at residues 7092–7517 (SFAQGRLWFL…VLDQPLTPIS (426 aa)) is condensation 6. The segment at 7572–7976 (TYAQLDEQSD…DHKSVLAATV (405 aa)) is adenylation 6. The Carrier 6 domain occupies 8060–8134 (PPRDEVEAVL…DLADIIRRGS (75 aa)). Residue Ser8094 is modified to O-(pantetheine 4'-phosphoryl)serine. The condensation 7 stretch occupies residues 8152 to 8582 (SFAQGRLWFL…PKQRLMAMPI (431 aa)). The interval 8633-9038 (TYADLDGQSN…GHDLVHDAAV (406 aa)) is adenylation 7. The tract at residues 9111-9288 (PVNEMKEWLD…EESEEELLVD (178 aa)) is methyltransferase (M) domain 5. Residues 9555-9629 (APRNDTEIVL…DLAASIEQGS (75 aa)) enclose the Carrier 7 domain. Ser9589 bears the O-(pantetheine 4'-phosphoryl)serine mark. The interval 9647–10077 (SYAQGRLWFL…QVSISTMPLT (431 aa)) is condensation 8. The segment at 10127-10529 (SYTSLDQKSE…GNKAIHDAAV (403 aa)) is adenylation 8. Positions 10588 to 10768 (RDFTSWTSMY…DQIRQEVARL (181 aa)) are methyltransferase (M) domain 6. The Carrier 8 domain occupies 11052 to 11126 (APRNDIEAVL…DLADVVQTGS (75 aa)). Residue Ser11086 is modified to O-(pantetheine 4'-phosphoryl)serine. A condensation 9 region spans residues 11144 to 11567 (SFSQGRLWFL…HANLATLPLT (424 aa)). Positions 11616-12019 (TYTELDERSS…RDPAISDSAV (404 aa)) are adenylation 9. The region spanning 12124–12198 (APRNDIETII…QLAASIQQGS (75 aa)) is the Carrier 9 domain. An O-(pantetheine 4'-phosphoryl)serine modification is found at Ser12158. Residues 12216 to 12645 (SFAQGRLWFL…IAISTMPLVD (430 aa)) are condensation 10. Positions 12696–13096 (TYAELDQQSD…SDSSINDAVV (401 aa)) are adenylation 10. The segment at 13162–13343 (YDGSLIPREE…EDDEEELLVD (182 aa)) is methyltransferase (M) domain 7. One can recognise a Carrier 10 domain in the interval 13620–13694 (APRTEIEVVL…DLAASILQGS (75 aa)). Position 13654 is an O-(pantetheine 4'-phosphoryl)serine (Ser13654). A condensation 11 region spans residues 13710 to 14143 (EQSFAQGRLW…PQSPIATMPL (434 aa)). The interval 14194 to 14598 (TYAELDRLSD…SENSVTDAAV (405 aa)) is adenylation 11. A Carrier 11 domain is found at 14695–14769 (APRNETEAAI…SLAGKLEQQQ (75 aa)). Ser14729 carries the post-translational modification O-(pantetheine 4'-phosphoryl)serine. A condensation 12 region spans residues 14814-15158 (DMYPATQTQI…HPEAEIEGQQ (345 aa)). Residues 15169 to 15224 (QARQANGHAPNGTNGTNGTNGTNGANGTNGTNGTNGTHANGINGSNGVNGRDSNVV) form a disordered region. A compositionally biased stretch (low complexity) spans 15173–15211 (ANGHAPNGTNGTNGTNGTNGANGTNGTNGTNGTHANGIN). Residues 15213–15224 (SNGVNGRDSNVV) are compositionally biased toward polar residues.

It belongs to the NRP synthetase family. It depends on pantetheine 4'-phosphate as a cofactor.

In terms of biological role, nonribosomal peptide synthetase; part of the gene cluster that mediates the biosynthesis of the cycloundecapeptide cyclosporin A (CsA), a compound with antifungal activity used as an immunosuppressant drug. Cyclosporin A contains three non-proteinogenic amino acids: D-alanine, alpha-amino butyric acid and the unusual amino acid (4R)-4-[(E)-2-butenyl]-4-methyl-l-threonine (Bmt). The nonribosomal peptide synthetase (NRPS) catalyzes the elongation and cyclization of the undecapeptide chain. SimA contains 11 modules responsible for sequential uptake of substrates and chain elongation. In addition to the core condensation-adenylation-thiolation (C-A-T) domains present in each module, seven modules contain an additional N-methylation (M) domain (modules 2, 3, 4, 5, 7, 8, and 10). The terminal C domain (C12 or Ct) is implicated in cyclization of the peptidyl chains to form CsA. The first module (A1) takes up D-Ala which is provided by the alanine racemase simB. The A2, A3, A8, and A10 domains have the same substrate-specific signature for recognition of leucine residues. The unusual amino acid (4R)-4-[(E)-2-butenyl]-4-methyl-l-threonine (Bmt) is recognized by the fifth module (A5). The A11 domain recognizes L-Ala. The PKS simG mediates the biosynthesis of 3R-hydroxyl-4R-methyl-6E-octenoic acid from acetyl coenzyme A (acetyl-CoA), malonyl-CoA, and S-adenosylmethionine, and 3R-hydroxyl-4R-methyl-6E-octenoic acid is then be repeatedly oxidized by simI to 3R-hydroxy-4R-methyl-2-keto-6E-octenoic acid. The latter is likely converted to Bmt through the action of the aminotransferase SimJ. This Tolypocladium inflatum (Cyclosporin fungus) protein is Cyclosporin synthetase simA.